Consider the following 411-residue polypeptide: Methylthioribose-1-phosphate isomerase (411 aa).

S2 carries the N-acetylserine modification. The Proton donor role is filled by D280. S351 carries the phosphoserine modification.

Belongs to the eIF-2B alpha/beta/delta subunits family. MtnA subfamily. Homodimer.

The protein localises to the cytoplasm. The protein resides in the nucleus. It catalyses the reaction 5-(methylsulfanyl)-alpha-D-ribose 1-phosphate = 5-(methylsulfanyl)-D-ribulose 1-phosphate. It participates in amino-acid biosynthesis; L-methionine biosynthesis via salvage pathway; L-methionine from S-methyl-5-thio-alpha-D-ribose 1-phosphate: step 1/6. In terms of biological role, catalyzes the interconversion of methylthioribose-1-phosphate (MTR-1-P) into methylthioribulose-1-phosphate (MTRu-1-P). The sequence is that of Methylthioribose-1-phosphate isomerase from Saccharomyces cerevisiae (strain JAY291) (Baker's yeast).